The sequence spans 115 residues: Large ribosomal subunit protein bL19 (115 aa).

The protein belongs to the bacterial ribosomal protein bL19 family.

Functionally, this protein is located at the 30S-50S ribosomal subunit interface and may play a role in the structure and function of the aminoacyl-tRNA binding site. The chain is Large ribosomal subunit protein bL19 from Streptococcus uberis (strain ATCC BAA-854 / 0140J).